Here is a 135-residue protein sequence, read N- to C-terminus: Large ribosomal subunit protein bL19 (135 aa).

It belongs to the bacterial ribosomal protein bL19 family.

Functionally, this protein is located at the 30S-50S ribosomal subunit interface and may play a role in the structure and function of the aminoacyl-tRNA binding site. The polypeptide is Large ribosomal subunit protein bL19 (Xanthomonas campestris pv. campestris (strain 8004)).